The chain runs to 305 residues: Serine/threonine-protein phosphatase PP2A catalytic subunit (305 aa).

Residues Asp53, His55, Asp81, and Asn113 each contribute to the Mn(2+) site. The Proton donor role is filled by His114. Positions 163 and 237 each coordinate Mn(2+).

It belongs to the PPP phosphatase family. PP-2A subfamily. Mn(2+) serves as cofactor.

The catalysed reaction is O-phospho-L-seryl-[protein] + H2O = L-seryl-[protein] + phosphate. It catalyses the reaction O-phospho-L-threonyl-[protein] + H2O = L-threonyl-[protein] + phosphate. This Helianthus annuus (Common sunflower) protein is Serine/threonine-protein phosphatase PP2A catalytic subunit.